We begin with the raw amino-acid sequence, 213 residues long: Large ribosomal subunit protein uL3 (213 aa).

Position 151 is an N5-methylglutamine (Q151).

It belongs to the universal ribosomal protein uL3 family. Part of the 50S ribosomal subunit. Forms a cluster with proteins L14 and L19. Methylated by PrmB.

Functionally, one of the primary rRNA binding proteins, it binds directly near the 3'-end of the 23S rRNA, where it nucleates assembly of the 50S subunit. The polypeptide is Large ribosomal subunit protein uL3 (Rhizobium leguminosarum bv. trifolii (strain WSM2304)).